The primary structure comprises 774 residues: Lon protease 2 (774 aa).

Residues 5-198 form the Lon N-terminal domain; the sequence is YPLMPLRDIV…LLLEILFREL (194 aa). 350 to 357 contacts ATP; that stretch reads GPPGVGKT. Residues 588 to 769 form the Lon proteolytic domain; that stretch reads RDEVGLATGL…DQVLEQALLS (182 aa). Residues serine 675 and lysine 718 contribute to the active site.

It belongs to the peptidase S16 family. In terms of assembly, homohexamer. Organized in a ring with a central cavity.

The protein resides in the cytoplasm. It catalyses the reaction Hydrolysis of proteins in presence of ATP.. ATP-dependent serine protease that mediates the selective degradation of mutant and abnormal proteins as well as certain short-lived regulatory proteins. Required for cellular homeostasis and for survival from DNA damage and developmental changes induced by stress. Degrades polypeptides processively to yield small peptide fragments that are 5 to 10 amino acids long. Binds to DNA in a double-stranded, site-specific manner. This chain is Lon protease 2, found in Desulfotalea psychrophila (strain LSv54 / DSM 12343).